The chain runs to 77 residues: MSNIEERVKKIIVEQLGVKEEDVKPAASFVDDLGADSLDTVELVMALEEEFDTEIPDEEAEKITTVQAAIDYVSKNQ.

The 76-residue stretch at 2–77 folds into the Carrier domain; sequence SNIEERVKKI…AAIDYVSKNQ (76 aa). O-(pantetheine 4'-phosphoryl)serine is present on Ser37.

It belongs to the acyl carrier protein (ACP) family. Post-translationally, 4'-phosphopantetheine is transferred from CoA to a specific serine of apo-ACP by AcpS. This modification is essential for activity because fatty acids are bound in thioester linkage to the sulfhydryl of the prosthetic group.

It localises to the cytoplasm. The protein operates within lipid metabolism; fatty acid biosynthesis. In terms of biological role, carrier of the growing fatty acid chain in fatty acid biosynthesis. The protein is Acyl carrier protein of Shewanella oneidensis (strain ATCC 700550 / JCM 31522 / CIP 106686 / LMG 19005 / NCIMB 14063 / MR-1).